The following is a 140-amino-acid chain: Putative pre-16S rRNA nuclease (140 aa).

Belongs to the YqgF nuclease family.

The protein resides in the cytoplasm. Functionally, could be a nuclease involved in processing of the 5'-end of pre-16S rRNA. The polypeptide is Putative pre-16S rRNA nuclease (Aeromonas hydrophila).